Consider the following 253-residue polypeptide: tRNA (guanine-N(7)-)-methyltransferase (253 aa).

Residues 1–12 are compositionally biased toward pro residues; the sequence is MSQTPMPQPDQA. The disordered stretch occupies residues 1–39; it reads MSQTPMPQPDQAPPVDVGQPVDEAEAKRRRFKTHGRKKG. A compositionally biased stretch (basic residues) spans 27-39; the sequence is KRRRFKTHGRKKG. S-adenosyl-L-methionine is bound by residues E84, D109, N136, and D159. D159 is an active-site residue. Residues K163, D195, and 232–235 contribute to the substrate site; that span reads TNFE.

Belongs to the class I-like SAM-binding methyltransferase superfamily. TrmB family.

The enzyme catalyses guanosine(46) in tRNA + S-adenosyl-L-methionine = N(7)-methylguanosine(46) in tRNA + S-adenosyl-L-homocysteine. It participates in tRNA modification; N(7)-methylguanine-tRNA biosynthesis. In terms of biological role, catalyzes the formation of N(7)-methylguanine at position 46 (m7G46) in tRNA. In Magnetococcus marinus (strain ATCC BAA-1437 / JCM 17883 / MC-1), this protein is tRNA (guanine-N(7)-)-methyltransferase.